We begin with the raw amino-acid sequence, 682 residues long: tRNA(Met) cytidine acetyltransferase TmcA (682 aa).

ATP-binding positions include glutamine 176, 198-207 (GRGKSTLAGM), and arginine 320. An N-acetyltransferase domain is found at 357–534 (QQQWIQQPEL…SGCYTAMAIF (178 aa)). Acetyl-CoA-binding positions include 462 to 464 (VAV) and glutamate 502.

It belongs to the RNA cytidine acetyltransferase family. TmcA subfamily.

It localises to the cytoplasm. The catalysed reaction is cytidine(34) in elongator tRNA(Met) + acetyl-CoA + ATP + H2O = N(4)-acetylcytidine(34) in elongator tRNA(Met) + ADP + phosphate + CoA + H(+). Catalyzes the formation of N(4)-acetylcytidine (ac(4)C) at the wobble position of tRNA(Met), by using acetyl-CoA as an acetyl donor and ATP (or GTP). This is tRNA(Met) cytidine acetyltransferase TmcA from Photorhabdus asymbiotica subsp. asymbiotica (strain ATCC 43949 / 3105-77) (Xenorhabdus luminescens (strain 2)).